The following is a 98-amino-acid chain: Small ribosomal subunit protein uS19 (98 aa).

It belongs to the universal ribosomal protein uS19 family.

In terms of biological role, protein S19 forms a complex with S13 that binds strongly to the 16S ribosomal RNA. The protein is Small ribosomal subunit protein uS19 of Chlorobaculum tepidum (strain ATCC 49652 / DSM 12025 / NBRC 103806 / TLS) (Chlorobium tepidum).